The sequence spans 202 residues: dTTP/UTP pyrophosphatase (202 aa).

Asp74 (proton acceptor) is an active-site residue.

The protein belongs to the Maf family. YhdE subfamily. The cofactor is a divalent metal cation.

The protein resides in the cytoplasm. It catalyses the reaction dTTP + H2O = dTMP + diphosphate + H(+). It carries out the reaction UTP + H2O = UMP + diphosphate + H(+). In terms of biological role, nucleoside triphosphate pyrophosphatase that hydrolyzes dTTP and UTP. May have a dual role in cell division arrest and in preventing the incorporation of modified nucleotides into cellular nucleic acids. The chain is dTTP/UTP pyrophosphatase from Methylococcus capsulatus (strain ATCC 33009 / NCIMB 11132 / Bath).